Consider the following 257-residue polypeptide: Transmembrane protein C257L (257 aa).

2 helical membrane passes run 123–143 (LELLGYSPTPIIGGDFMFTAL) and 163–183 (MMIFFLIILLCVILGIFYVLV).

It belongs to the asfivirus C257R family.

It is found in the host membrane. The protein localises to the virion. This chain is Transmembrane protein C257L, found in African swine fever virus (isolate Warthog/Namibia/Wart80/1980) (ASFV).